A 522-amino-acid chain; its full sequence is Phosphatidylinositol 3,4,5-trisphosphate 3-phosphatase TPTE2 (522 aa).

A compositionally biased stretch (polar residues) spans 1 to 11 (MNESPQTNEFK). The segment at 1-28 (MNESPQTNEFKGTTEEAPAKESPHTSEF) is disordered. The span at 12-27 (GTTEEAPAKESPHTSE) shows a compositional bias: basic and acidic residues. 3 consecutive transmembrane segments (helical) span residues 66–86 (IVHSIVSSFAFGIFGVFLVLL), 111–131 (ISLAIGLFFLMDVLLRVFVEG), and 146–166 (AIIVIPLLVDVIYIFFDIKLL). Residues 210–386 (RRYTRDGFDL…GYFAQVKHLY (177 aa)) form the Phosphatase tensin-type domain. The Phosphocysteine intermediate role is filled by Cys320. Residues 393 to 522 (RRILFIKRFI…FAVEILFGEK (130 aa)) form the C2 tensin-type domain.

In terms of tissue distribution, isoform 3 is expressed in testis, brain and stomach while isoform 4 seems to be testis-specific.

The protein localises to the endoplasmic reticulum membrane. The protein resides in the golgi apparatus membrane. It localises to the cytoplasm. It carries out the reaction a 1,2-diacyl-sn-glycero-3-phospho-(1D-myo-inositol-3,4,5-trisphosphate) + H2O = a 1,2-diacyl-sn-glycero-3-phospho-(1D-myo-inositol-4,5-bisphosphate) + phosphate. Acts as a lipid phosphatase, removing the phosphate in the D3 position of the inositol ring from phosphatidylinositol 3,4,5-trisphosphate. In terms of biological role, shows no phosphoinositide phosphatase activity. This is Phosphatidylinositol 3,4,5-trisphosphate 3-phosphatase TPTE2 (TPTE2) from Homo sapiens (Human).